The chain runs to 347 residues: Ribosomal RNA small subunit methyltransferase C (347 aa).

It belongs to the methyltransferase superfamily. RsmC family. As to quaternary structure, monomer.

The protein localises to the cytoplasm. It carries out the reaction guanosine(1207) in 16S rRNA + S-adenosyl-L-methionine = N(2)-methylguanosine(1207) in 16S rRNA + S-adenosyl-L-homocysteine + H(+). Specifically methylates the guanine in position 1207 of 16S rRNA in the 30S particle. This chain is Ribosomal RNA small subunit methyltransferase C, found in Yersinia enterocolitica serotype O:8 / biotype 1B (strain NCTC 13174 / 8081).